The primary structure comprises 282 residues: D-alanine aminotransferase (282 aa).

Y32 is a binding site for substrate. Residue R51 coordinates pyridoxal 5'-phosphate. R99 and H101 together coordinate substrate. Residue K146 is the Proton acceptor of the active site. K146 bears the N6-(pyridoxal phosphate)lysine mark. E178 serves as a coordination point for pyridoxal 5'-phosphate.

The protein belongs to the class-IV pyridoxal-phosphate-dependent aminotransferase family. As to quaternary structure, homodimer. It depends on pyridoxal 5'-phosphate as a cofactor.

The catalysed reaction is D-alanine + 2-oxoglutarate = D-glutamate + pyruvate. In terms of biological role, acts on the D-isomers of alanine, leucine, aspartate, glutamate, aminobutyrate, norvaline and asparagine. The enzyme transfers an amino group from a substrate D-amino acid to the pyridoxal phosphate cofactor to form pyridoxamine and an alpha-keto acid in the first half-reaction. The second half-reaction is the reverse of the first, transferring the amino group from the pyridoxamine to a second alpha-keto acid to form the product D-amino acid via a ping-pong mechanism. This is an important process in the formation of D-alanine and D-glutamate, which are essential bacterial cell wall components. This is D-alanine aminotransferase (dat) from Staphylococcus aureus (strain MSSA476).